Reading from the N-terminus, the 774-residue chain is MAKLTLEVEQYTQNLREKLQEAGYSYYVLDQPIMEDAVYDHLLRELQELESQYPQLIVSDSPTQRVGEKPATKFVSVKHNIPLYSLENAFNIQELKSWQERWQRQTLLENQRLTLPLRGEVKIKNSIDESDNFSTVNSLAPVITGSNFDEIDLASVDYICELKIDGSALALTYENGLLVRGATRGDGIMGEDITQNVKTINSIPLKLKVDNPPLLVEVRGEAFLSINVFENINAEREKIGEIIFANPRNAAAGTLRQLDSKIVAKRRLDFFAYTLYLEENESNFLQFYTQSQCLELLKKLGFKVNPNGQVCSSLNEVEAYYQYWDKQRENLPYLTDGVVVKLNSLSLQEKLGFTQKYPRWAIALKYPAEEIPTIVQGVTVQVGRTGAITPVAELKPVQLAGTTVQRASLHNSDRLAELDLHIGDTVIVRKAGEIIPEVVRVLPELRPKKAQRFQMPTHCPECSQPLIKPRNEAVTRCINTSCPAILRGSLAHWASRAALDINGLGEKLVQQLVNSGLVKSVADLYNLTMEDLTSLERMGKKSANKLIEAMGTSKAQPWRRVLYGLGIRHVGTVNAELLTQKFPTVAQLSQAKATDIETVHGIGPEIAQYVEQWFRVPANQNLVERLKIAGVTMETKDSTSGMAKLTETVLAIQNLAARQNLVARQNLENLVERLKIAGVTMETKDSTSDVVEVQSGLLRGKTFVLTGTLPTMRRDEAKNLIQNAGGKVTSSVSSKTDFIVVGEDGGSKLEKAKKLGVKELSESELLEALAVTGI.

NAD(+) is bound by residues 36-40 (DAVYD), 85-86 (SL), and Glu161. The active-site N6-AMP-lysine intermediate is the Lys163. Positions 184, 221, 341, and 365 each coordinate NAD(+). Zn(2+) is bound by residues Cys459, Cys462, Cys477, and Cys482. In terms of domain architecture, BRCT spans 693 to 774 (VQSGLLRGKT…LLEALAVTGI (82 aa)).

Belongs to the NAD-dependent DNA ligase family. LigA subfamily. It depends on Mg(2+) as a cofactor. Mn(2+) is required as a cofactor.

It carries out the reaction NAD(+) + (deoxyribonucleotide)n-3'-hydroxyl + 5'-phospho-(deoxyribonucleotide)m = (deoxyribonucleotide)n+m + AMP + beta-nicotinamide D-nucleotide.. DNA ligase that catalyzes the formation of phosphodiester linkages between 5'-phosphoryl and 3'-hydroxyl groups in double-stranded DNA using NAD as a coenzyme and as the energy source for the reaction. It is essential for DNA replication and repair of damaged DNA. The chain is DNA ligase from Trichodesmium erythraeum (strain IMS101).